We begin with the raw amino-acid sequence, 139 residues long: Large ribosomal subunit protein uL16 (139 aa).

Belongs to the universal ribosomal protein uL16 family. Part of the 50S ribosomal subunit.

Functionally, binds 23S rRNA and is also seen to make contacts with the A and possibly P site tRNAs. The sequence is that of Large ribosomal subunit protein uL16 from Koribacter versatilis (strain Ellin345).